We begin with the raw amino-acid sequence, 161 residues long: ATP synthase subunit b (161 aa).

The helical transmembrane segment at 12-32 (IAFFLFVFFCMKYIWPNLISL) threads the bilayer.

It belongs to the ATPase B chain family. F-type ATPases have 2 components, F(1) - the catalytic core - and F(0) - the membrane proton channel. F(1) has five subunits: alpha(3), beta(3), gamma(1), delta(1), epsilon(1). F(0) has three main subunits: a(1), b(2) and c(10-14). The alpha and beta chains form an alternating ring which encloses part of the gamma chain. F(1) is attached to F(0) by a central stalk formed by the gamma and epsilon chains, while a peripheral stalk is formed by the delta and b chains.

The protein localises to the cell membrane. Functionally, f(1)F(0) ATP synthase produces ATP from ADP in the presence of a proton or sodium gradient. F-type ATPases consist of two structural domains, F(1) containing the extramembraneous catalytic core and F(0) containing the membrane proton channel, linked together by a central stalk and a peripheral stalk. During catalysis, ATP synthesis in the catalytic domain of F(1) is coupled via a rotary mechanism of the central stalk subunits to proton translocation. Its function is as follows. Component of the F(0) channel, it forms part of the peripheral stalk, linking F(1) to F(0). The sequence is that of ATP synthase subunit b from Wigglesworthia glossinidia brevipalpis.